The sequence spans 232 residues: Chaperone protein CssC (232 aa).

A signal peptide spans 1–20; the sequence is MKSKLIILLMLVPFSSFSTE.

The protein belongs to the periplasmic pilus chaperone family.

It is found in the periplasm. Involved in the biogenesis of the CS6 fimbria. The sequence is that of Chaperone protein CssC (cssC) from Escherichia coli.